The primary structure comprises 123 residues: Small ribosomal subunit protein uS12 (123 aa).

Residues 1-32 (MPTINQLIRKPREAQKARDKAPALQSSPQKRG) form a disordered region. Residues 10-21 (KPREAQKARDKA) are compositionally biased toward basic and acidic residues. Position 89 is a 3-methylthioaspartic acid (Asp89).

The protein belongs to the universal ribosomal protein uS12 family. Part of the 30S ribosomal subunit. Contacts proteins S8 and S17. May interact with IF1 in the 30S initiation complex.

Its function is as follows. With S4 and S5 plays an important role in translational accuracy. In terms of biological role, interacts with and stabilizes bases of the 16S rRNA that are involved in tRNA selection in the A site and with the mRNA backbone. Located at the interface of the 30S and 50S subunits, it traverses the body of the 30S subunit contacting proteins on the other side and probably holding the rRNA structure together. The combined cluster of proteins S8, S12 and S17 appears to hold together the shoulder and platform of the 30S subunit. This is Small ribosomal subunit protein uS12 from Azorhizobium caulinodans (strain ATCC 43989 / DSM 5975 / JCM 20966 / LMG 6465 / NBRC 14845 / NCIMB 13405 / ORS 571).